The primary structure comprises 401 residues: Cartilage-associated protein (401 aa).

Positions 1–26 (MEPGRRGAAALLALLCVACALRAGRA) are cleaved as a signal peptide. N-linked (GlcNAc...) asparagine glycosylation is found at asparagine 87 and asparagine 363.

Belongs to the leprecan family. Found in articular chondrocytes. Expressed in a variety of tissues.

It localises to the secreted. The protein resides in the extracellular space. It is found in the extracellular matrix. In terms of biological role, necessary for efficient 3-hydroxylation of fibrillar collagen prolyl residues. This Homo sapiens (Human) protein is Cartilage-associated protein (CRTAP).